The sequence spans 127 residues: Large ribosomal subunit protein bL17 (127 aa).

The protein belongs to the bacterial ribosomal protein bL17 family. Part of the 50S ribosomal subunit. Contacts protein L32.

This Leuconostoc mesenteroides subsp. mesenteroides (strain ATCC 8293 / DSM 20343 / BCRC 11652 / CCM 1803 / JCM 6124 / NCDO 523 / NBRC 100496 / NCIMB 8023 / NCTC 12954 / NRRL B-1118 / 37Y) protein is Large ribosomal subunit protein bL17.